The chain runs to 475 residues: Aspartyl/glutamyl-tRNA(Asn/Gln) amidotransferase subunit B (475 aa).

The protein belongs to the GatB/GatE family. GatB subfamily. In terms of assembly, heterotrimer of A, B and C subunits.

The catalysed reaction is L-glutamyl-tRNA(Gln) + L-glutamine + ATP + H2O = L-glutaminyl-tRNA(Gln) + L-glutamate + ADP + phosphate + H(+). The enzyme catalyses L-aspartyl-tRNA(Asn) + L-glutamine + ATP + H2O = L-asparaginyl-tRNA(Asn) + L-glutamate + ADP + phosphate + 2 H(+). Functionally, allows the formation of correctly charged Asn-tRNA(Asn) or Gln-tRNA(Gln) through the transamidation of misacylated Asp-tRNA(Asn) or Glu-tRNA(Gln) in organisms which lack either or both of asparaginyl-tRNA or glutaminyl-tRNA synthetases. The reaction takes place in the presence of glutamine and ATP through an activated phospho-Asp-tRNA(Asn) or phospho-Glu-tRNA(Gln). In Chlorobium phaeobacteroides (strain DSM 266 / SMG 266 / 2430), this protein is Aspartyl/glutamyl-tRNA(Asn/Gln) amidotransferase subunit B.